A 475-amino-acid chain; its full sequence is LEC14B homolog (475 aa).

The disordered stretch occupies residues 1–34 (MSYRTRFGKDNSACDSGNAVEGSGSSKGPNEVSN). The span at 23-33 (SGSSKGPNEVS) shows a compositional bias: polar residues. WD repeat units follow at residues 211 to 240 (DEFGIFSVRFSTDGRELVAASRDASIYVYD), 252 to 283 (AHSSDVNTVCFADETGHLIYSGSDDNLCKVWD), 299 to 329 (GHLEGVTFIDSRGDGRYFISNGKDQTTQLWD), 375 to 411 (GHGVLRTLIRCYLSPAYSTGQKYIYTGSSDHCVYIYD), and 423 to 453 (HHEGPVRDCSWHPLYPMLVSSSWDGTIARWE).

This sequence belongs to the WD repeat LEC14B family.

In Prunus armeniaca (Apricot), this protein is LEC14B homolog.